Reading from the N-terminus, the 417-residue chain is Serine hydroxymethyltransferase (417 aa).

Residues leucine 121 and 125-127 contribute to the (6S)-5,6,7,8-tetrahydrofolate site; that span reads GHL. N6-(pyridoxal phosphate)lysine is present on lysine 230. A (6S)-5,6,7,8-tetrahydrofolate-binding site is contributed by 355–357; it reads SPF.

It belongs to the SHMT family. As to quaternary structure, homodimer. The cofactor is pyridoxal 5'-phosphate.

The protein localises to the cytoplasm. It catalyses the reaction (6R)-5,10-methylene-5,6,7,8-tetrahydrofolate + glycine + H2O = (6S)-5,6,7,8-tetrahydrofolate + L-serine. The protein operates within one-carbon metabolism; tetrahydrofolate interconversion. It functions in the pathway amino-acid biosynthesis; glycine biosynthesis; glycine from L-serine: step 1/1. In terms of biological role, catalyzes the reversible interconversion of serine and glycine with tetrahydrofolate (THF) serving as the one-carbon carrier. This reaction serves as the major source of one-carbon groups required for the biosynthesis of purines, thymidylate, methionine, and other important biomolecules. Also exhibits THF-independent aldolase activity toward beta-hydroxyamino acids, producing glycine and aldehydes, via a retro-aldol mechanism. This Nitrosococcus oceani (strain ATCC 19707 / BCRC 17464 / JCM 30415 / NCIMB 11848 / C-107) protein is Serine hydroxymethyltransferase.